Here is a 244-residue protein sequence, read N- to C-terminus: E3 ubiquitin-protein ligase RNF166 (244 aa).

A disordered region spans residues 10 to 30; the sequence is AQRPQAPGPGPPRPPPPAGPA. Over residues 15–28 the composition is skewed to pro residues; that stretch reads APGPGPPRPPPPAG. Residues 40–80 form an RING-type zinc finger; it reads CPICLEVFHRAVGIAGCGHTFCGECLQPCLQVPSPLCPLCR. Positions 105, 108, 120, and 124 each coordinate Zn(2+). Residues 105 to 124 form a C2HC RNF-type zinc finger; the sequence is CRGCSKKVTLAKMRSHVSSC. Positions 228-244 constitute a UIM domain; it reads DEEAALQAALALSLSEN.

The protein localises to the cytoplasm. It carries out the reaction S-ubiquitinyl-[E2 ubiquitin-conjugating enzyme]-L-cysteine + [acceptor protein]-L-lysine = [E2 ubiquitin-conjugating enzyme]-L-cysteine + N(6)-ubiquitinyl-[acceptor protein]-L-lysine.. It functions in the pathway protein modification; protein ubiquitination. Functionally, E3 ubiquitin-protein ligase that promotes the ubiquitination of different substrates. In Gallus gallus (Chicken), this protein is E3 ubiquitin-protein ligase RNF166 (RNF166).